Consider the following 103-residue polypeptide: uncharacterized protein (103 aa).

Residues 37–57 (FILLSSLLIGGLLITIACYHI) form a helical membrane-spanning segment.

It localises to the membrane. This is an uncharacterized protein from Saccharomyces cerevisiae (strain ATCC 204508 / S288c) (Baker's yeast).